Reading from the N-terminus, the 267-residue chain is 2-dehydro-3-deoxyphosphooctonate aldolase (267 aa).

Belongs to the KdsA family.

The protein resides in the cytoplasm. The catalysed reaction is D-arabinose 5-phosphate + phosphoenolpyruvate + H2O = 3-deoxy-alpha-D-manno-2-octulosonate-8-phosphate + phosphate. The protein operates within carbohydrate biosynthesis; 3-deoxy-D-manno-octulosonate biosynthesis; 3-deoxy-D-manno-octulosonate from D-ribulose 5-phosphate: step 2/3. It functions in the pathway bacterial outer membrane biogenesis; lipopolysaccharide biosynthesis. This chain is 2-dehydro-3-deoxyphosphooctonate aldolase, found in Campylobacter jejuni subsp. doylei (strain ATCC BAA-1458 / RM4099 / 269.97).